Consider the following 323-residue polypeptide: Fructose-1,6-bisphosphatase class 1 (323 aa).

The Mg(2+) site is built by glutamate 84, aspartate 103, leucine 105, and aspartate 106. Substrate is bound by residues 106 to 109 (DGSS), asparagine 198, and lysine 264. Position 270 (glutamate 270) interacts with Mg(2+).

The protein belongs to the FBPase class 1 family. In terms of assembly, homotetramer. Mg(2+) is required as a cofactor.

It localises to the cytoplasm. The catalysed reaction is beta-D-fructose 1,6-bisphosphate + H2O = beta-D-fructose 6-phosphate + phosphate. It functions in the pathway carbohydrate biosynthesis; gluconeogenesis. This is Fructose-1,6-bisphosphatase class 1 from Cellvibrio japonicus (strain Ueda107) (Pseudomonas fluorescens subsp. cellulosa).